The sequence spans 445 residues: MNHEQSRALYDRALSVLSGGVNSSVRATRPYPFFVEKGDGGHVIDADGNRYIDFVMGYGPLLLGHSLPEQVQSAIQQHAAEGPMYGAPTEVEVELAEFVTRHVPSVEMLRFVNSGTEATVSAVRLARGYTGRDKIVVMQSGYHGAQESTLVEGEGDHTAPSSPGIPESFAEHTLTVPFNDEEAAHEVFEEHGDDIAAVLTEPILGNYGIVHPVEGYHDTLRQLCDDHGSLLIFDEVITGFRVGGLQCAQGAFDIDPDITTFGKIVGGGFPVGAIGGKSEIIEQFTPAGDVFQSGTFSGHPVTMAAGLETLRYAAEHDVYGHVNDLGERLRAGLQDILEDQAPEYTVVGRDSMFKVIFTRDGPDSLEGQCEAGCQQQESCPRFEYCPKTGHDVTQAETERWERLFWPAMKDQGVFLTANQFESQFICDAHTGEDIENALEAYKEAI.

Lys-263 is modified (N6-(pyridoxal phosphate)lysine).

Belongs to the class-III pyridoxal-phosphate-dependent aminotransferase family. HemL subfamily. Requires pyridoxal 5'-phosphate as cofactor.

The protein localises to the cytoplasm. The catalysed reaction is (S)-4-amino-5-oxopentanoate = 5-aminolevulinate. It participates in porphyrin-containing compound metabolism; protoporphyrin-IX biosynthesis; 5-aminolevulinate from L-glutamyl-tRNA(Glu): step 2/2. The protein is Glutamate-1-semialdehyde 2,1-aminomutase of Haloarcula marismortui (strain ATCC 43049 / DSM 3752 / JCM 8966 / VKM B-1809) (Halobacterium marismortui).